A 60-amino-acid chain; its full sequence is Large ribosomal subunit protein uL30 (60 aa).

Belongs to the universal ribosomal protein uL30 family. Part of the 50S ribosomal subunit.

The chain is Large ribosomal subunit protein uL30 from Shewanella baltica (strain OS223).